A 364-amino-acid polypeptide reads, in one-letter code: 3-isopropylmalate dehydrogenase (364 aa).

An NAD(+)-binding site is contributed by 76 to 89 (GPKWEKLPPNEQPE). Positions 97, 107, 136, and 225 each coordinate substrate. Mg(2+) is bound by residues Asp225, Asp249, and Asp253. Position 283–295 (283–295 (GSAPDIAGKGIAN)) interacts with NAD(+).

The protein belongs to the isocitrate and isopropylmalate dehydrogenases family. LeuB type 1 subfamily. As to quaternary structure, homodimer. Mg(2+) serves as cofactor. The cofactor is Mn(2+).

The protein resides in the cytoplasm. The catalysed reaction is (2R,3S)-3-isopropylmalate + NAD(+) = 4-methyl-2-oxopentanoate + CO2 + NADH. Its pathway is amino-acid biosynthesis; L-leucine biosynthesis; L-leucine from 3-methyl-2-oxobutanoate: step 3/4. In terms of biological role, catalyzes the oxidation of 3-carboxy-2-hydroxy-4-methylpentanoate (3-isopropylmalate) to 3-carboxy-4-methyl-2-oxopentanoate. The product decarboxylates to 4-methyl-2 oxopentanoate. The sequence is that of 3-isopropylmalate dehydrogenase from Shewanella oneidensis (strain ATCC 700550 / JCM 31522 / CIP 106686 / LMG 19005 / NCIMB 14063 / MR-1).